A 184-amino-acid polypeptide reads, in one-letter code: ATP synthase subunit b, chloroplastic (184 aa).

A helical membrane pass occupies residues 27–49 (LATNPINLSVVLGVLIFFGKGVL).

This sequence belongs to the ATPase B chain family. As to quaternary structure, F-type ATPases have 2 components, F(1) - the catalytic core - and F(0) - the membrane proton channel. F(1) has five subunits: alpha(3), beta(3), gamma(1), delta(1), epsilon(1). F(0) has four main subunits: a(1), b(1), b'(1) and c(10-14). The alpha and beta chains form an alternating ring which encloses part of the gamma chain. F(1) is attached to F(0) by a central stalk formed by the gamma and epsilon chains, while a peripheral stalk is formed by the delta, b and b' chains.

It localises to the plastid. Its subcellular location is the chloroplast thylakoid membrane. In terms of biological role, f(1)F(0) ATP synthase produces ATP from ADP in the presence of a proton or sodium gradient. F-type ATPases consist of two structural domains, F(1) containing the extramembraneous catalytic core and F(0) containing the membrane proton channel, linked together by a central stalk and a peripheral stalk. During catalysis, ATP synthesis in the catalytic domain of F(1) is coupled via a rotary mechanism of the central stalk subunits to proton translocation. Its function is as follows. Component of the F(0) channel, it forms part of the peripheral stalk, linking F(1) to F(0). The chain is ATP synthase subunit b, chloroplastic from Nicotiana sylvestris (Wood tobacco).